We begin with the raw amino-acid sequence, 180 residues long: Endoribonuclease YbeY (180 aa).

Residues His-118, His-122, and His-128 each coordinate Zn(2+).

Belongs to the endoribonuclease YbeY family. Zn(2+) serves as cofactor.

It is found in the cytoplasm. Single strand-specific metallo-endoribonuclease involved in late-stage 70S ribosome quality control and in maturation of the 3' terminus of the 16S rRNA. This is Endoribonuclease YbeY from Rhodococcus opacus (strain B4).